The following is a 305-amino-acid chain: tRNA dimethylallyltransferase (305 aa).

11 to 18 contacts ATP; the sequence is GPTAVGKT. 13 to 18 contributes to the substrate binding site; that stretch reads TAVGKT. Positions 36 to 39 are interaction with substrate tRNA; sequence DSMQ.

It belongs to the IPP transferase family. Monomer. Mg(2+) serves as cofactor.

The catalysed reaction is adenosine(37) in tRNA + dimethylallyl diphosphate = N(6)-dimethylallyladenosine(37) in tRNA + diphosphate. Its function is as follows. Catalyzes the transfer of a dimethylallyl group onto the adenine at position 37 in tRNAs that read codons beginning with uridine, leading to the formation of N6-(dimethylallyl)adenosine (i(6)A). The protein is tRNA dimethylallyltransferase of Listeria innocua serovar 6a (strain ATCC BAA-680 / CLIP 11262).